Consider the following 773-residue polypeptide: Membrane-bound aldehyde dehydrogenase [pyrroloquinoline-quinone] (773 aa).

A signal peptide (tat-type signal) is located at residues 1-44 (MGRLNRFRLGKDGRREQASLSRRGFLVTSLGAGVMFGFARPSSA).

Pyrroloquinoline quinone is required as a cofactor. In terms of processing, predicted to be exported by the Tat system. The position of the signal peptide cleavage has been experimentally proven.

Its subcellular location is the cell inner membrane. The enzyme catalyses an aldehyde + a quinone + H2O = a quinol + a carboxylate + H(+). The chain is Membrane-bound aldehyde dehydrogenase [pyrroloquinoline-quinone] from Gluconacetobacter polyoxogenes (Acetobacter polyoxogenes).